Consider the following 138-residue polypeptide: Phosphoribosyl-AMP cyclohydrolase (138 aa).

Aspartate 84 serves as a coordination point for Mg(2+). Cysteine 85 lines the Zn(2+) pocket. Mg(2+) contacts are provided by aspartate 86 and aspartate 88. Zn(2+) contacts are provided by cysteine 102 and cysteine 109.

It belongs to the PRA-CH family. Homodimer. Mg(2+) serves as cofactor. Requires Zn(2+) as cofactor.

The protein resides in the cytoplasm. It carries out the reaction 1-(5-phospho-beta-D-ribosyl)-5'-AMP + H2O = 1-(5-phospho-beta-D-ribosyl)-5-[(5-phospho-beta-D-ribosylamino)methylideneamino]imidazole-4-carboxamide. The protein operates within amino-acid biosynthesis; L-histidine biosynthesis; L-histidine from 5-phospho-alpha-D-ribose 1-diphosphate: step 3/9. Functionally, catalyzes the hydrolysis of the adenine ring of phosphoribosyl-AMP. This chain is Phosphoribosyl-AMP cyclohydrolase, found in Burkholderia orbicola (strain MC0-3).